Consider the following 558-residue polypeptide: MANDENTDGVNKSEKMEKMCEFIRPMVQNNPDGWGPCELPDQFKDIPYQPFSKSDRLGKISDWTGTAYQDKKFQNKYNSQFGGSGMKAYAYEHDEDETTFHLVDTTRVQKPPYQRGRFGQRNQRMRGRGGQRGGMSQMQALGKLKIHERDRRGQNKRWTRRNQAPIKMRDASVTVRPDWVTIEEMDFPRLSKLTLPGVKEGEDVLCCGAVEYYDKSYDRVNVKNEKPLQRIDRIFHTVTTTDDPVIRKLSKTEGNVYATDAILATIMCCTRSNYSWDIVIEKIGNKLFFDKRDNTEFDLLTVNETSVEPPQDDGNSLNSPRNLALEATFINHNFSQQVLKSNEPRYKFDEPNPFISEEEEGEVASVAYRYRKWDLNNGITLIARCEHDAVMQGPNNETQFLTIKALNEWDSKLANGVEWRRKLDTQRGAVLANELRNNACKLAKWTVQALLAGSDQLKFGYVSRASVRDSSKHVILETQQYKPNEFATQINLNMDNAWGILRCIIDICMNQKDGKYLIMKDPNKPMIRLYDIPDNTFESEGEEEDSDEEEQVKDAFQR.

The RNA gate stretch occupies residues 296–310; it reads EFDLLTVNETSVEPP. The disordered stretch occupies residues 534–558; it reads DNTFESEGEEEDSDEEEQVKDAFQR. Positions 537-551 are enriched in acidic residues; it reads FESEGEEEDSDEEEQ.

The protein belongs to the eIF-3 subunit D family. In terms of assembly, component of the eukaryotic translation initiation factor 3 (eIF-3) complex.

The protein localises to the cytoplasm. Its function is as follows. mRNA cap-binding component of the eukaryotic translation initiation factor 3 (eIF-3) complex, which is involved in protein synthesis of a specialized repertoire of mRNAs and, together with other initiation factors, stimulates binding of mRNA and methionyl-tRNAi to the 40S ribosome. The eIF-3 complex specifically targets and initiates translation of a subset of mRNAs involved in cell proliferation. In the eIF-3 complex, eif3d specifically recognizes and binds the 7-methylguanosine cap of a subset of mRNAs. This is Eukaryotic translation initiation factor 3 subunit D from Nasonia vitripennis (Parasitic wasp).